Reading from the N-terminus, the 1219-residue chain is A disintegrin and metalloproteinase with thrombospondin motifs 18 (1219 aa).

The signal sequence occupies residues 1-47; that stretch reads MECALLCLCALRAAGPGPPWGPAGLGRLAKALQLCCFCCASVAVALA. Residues 48–284 constitute a propeptide that is removed on maturation; the sequence is SDSGSSGGSG…EYGGTGRPRR (237 aa). Residues Asn-151 and Asn-190 are each glycosylated (N-linked (GlcNAc...) asparagine). The tract at residues 217–248 is disordered; that stretch reads YPGSQRTYPGHSPSHTPPASQSQEPEYSHRRW. Residues 218 to 241 show a composition bias toward polar residues; it reads PGSQRTYPGHSPSHTPPASQSQEP. The region spanning 293-498 is the Peptidase M12B domain; the sequence is LNVETLVVAD…PQAGCLVDEP (206 aa). 11 cysteine pairs are disulfide-bonded: Cys-369–Cys-420, Cys-395–Cys-402, Cys-414–Cys-493, Cys-453–Cys-477, Cys-521–Cys-546, Cys-532–Cys-553, Cys-541–Cys-572, Cys-566–Cys-577, Cys-601–Cys-638, Cys-605–Cys-643, and Cys-616–Cys-628. His-436 provides a ligand contact to Zn(2+). Glu-437 is a catalytic residue. His-440 and His-446 together coordinate Zn(2+). Positions 589–644 constitute a TSP type-1 1 domain; sequence HGQWSAWSKWSECSRTCGGGVKFQERHCSNPKPQYGGKYCPGSSRIYKLCNINPCP. Asn-745, Asn-838, Asn-865, and Asn-909 each carry an N-linked (GlcNAc...) asparagine glycan. TSP type-1 domains are found at residues 931 to 990, 991 to 1049, 1052 to 1116, and 1121 to 1176; these read CPAY…NSHA, CPPE…GRCP, NRLQ…RTCP, and AVAS…NFCP. The region spanning 1182-1219 is the PLAC domain; the sequence is DDPSCVDFFSWCHLVPQHGVCNHKFYGKQCCRSCTRKS.

Zn(2+) is required as a cofactor. In terms of processing, the precursor is cleaved by a furin endopeptidase. Post-translationally, glycosylated. Can be O-fucosylated by POFUT2 on a serine or a threonine residue found within the consensus sequence C1-X(2)-(S/T)-C2-G of the TSP type-1 repeat domains where C1 and C2 are the first and second cysteine residue of the repeat, respectively. Fucosylated repeats can then be further glycosylated by the addition of a beta-1,3-glucose residue by the glucosyltransferase, B3GALTL. Fucosylation mediates the efficient secretion of ADAMTS family members. Can also be C-glycosylated with one or two mannose molecules on tryptophan residues within the consensus sequence W-X-X-W of the TPRs, and N-glycosylated. These other glycosylations can also facilitate secretion.

It localises to the secreted. The protein localises to the extracellular space. The protein resides in the extracellular matrix. The chain is A disintegrin and metalloproteinase with thrombospondin motifs 18 (Adamts18) from Mus musculus (Mouse).